We begin with the raw amino-acid sequence, 144 residues long: NADH-ubiquinone oxidoreductase chain 6 (144 aa).

The next 5 helical transmembrane spans lie at 1-21 (MVKV…INID), 25-45 (SSFF…MSMH), 46-66 (IWFS…ILVY), 79-99 (YMAV…VLTY), and 108-128 (FYYS…LFFM).

It belongs to the complex I subunit 6 family.

The protein localises to the mitochondrion membrane. The enzyme catalyses a ubiquinone + NADH + 5 H(+)(in) = a ubiquinol + NAD(+) + 4 H(+)(out). In terms of biological role, core subunit of the mitochondrial membrane respiratory chain NADH dehydrogenase (Complex I) that is believed to belong to the minimal assembly required for catalysis. Complex I functions in the transfer of electrons from NADH to the respiratory chain. The immediate electron acceptor for the enzyme is believed to be ubiquinone. The polypeptide is NADH-ubiquinone oxidoreductase chain 6 (Caenorhabditis elegans).